Here is a 441-residue protein sequence, read N- to C-terminus: Peroxisomal biogenesis factor 3 (441 aa).

The Peroxisomal portion of the chain corresponds to 1–17; the sequence is MAPNQRSRSLLQRHRGK. The chain crosses the membrane as a helical span at residues 18 to 39; sequence VLISLTGIAALFTTGSVVVFFV. Over 40-441 the chain is Cytoplasmic; that stretch reads KRWLYKQQLR…GVSSSFSFKP (402 aa).

The protein belongs to the peroxin-3 family. In terms of assembly, interacts with MSP1; leading to inhibit the translocase activity of MSP1.

Its subcellular location is the peroxisome membrane. Its function is as follows. Involved in peroxisome biosynthesis. Acts as a regulator of MSP1 by inhibiting the ability of MSP1 to unfold target proteins. The chain is Peroxisomal biogenesis factor 3 (PEX3) from Saccharomyces cerevisiae (strain ATCC 204508 / S288c) (Baker's yeast).